A 326-amino-acid polypeptide reads, in one-letter code: Phospho-N-acetylmuramoyl-pentapeptide-transferase (326 aa).

The next 9 helical transmembrane spans lie at 3–23, 51–71, 79–99, 115–135, 138–158, 169–189, 195–215, 221–243, and 304–324; these read ISIS…PAFI, TMGG…VALF, VGMI…DDFL, LALQ…GGDM, IFGY…FWLV, GIDG…GVIA, MDIL…FVFN, VFMG…MALH, and VDFF…AILY.

This sequence belongs to the glycosyltransferase 4 family. MraY subfamily. The cofactor is Mg(2+).

The protein resides in the cell membrane. It carries out the reaction UDP-N-acetyl-alpha-D-muramoyl-L-alanyl-gamma-D-glutamyl-L-lysyl-D-alanyl-D-alanine + di-trans,octa-cis-undecaprenyl phosphate = Mur2Ac(oyl-L-Ala-gamma-D-Glu-L-Lys-D-Ala-D-Ala)-di-trans,octa-cis-undecaprenyl diphosphate + UMP. It functions in the pathway cell wall biogenesis; peptidoglycan biosynthesis. Catalyzes the initial step of the lipid cycle reactions in the biosynthesis of the cell wall peptidoglycan: transfers peptidoglycan precursor phospho-MurNAc-pentapeptide from UDP-MurNAc-pentapeptide onto the lipid carrier undecaprenyl phosphate, yielding undecaprenyl-pyrophosphoryl-MurNAc-pentapeptide, known as lipid I. This Streptococcus pneumoniae (strain Hungary19A-6) protein is Phospho-N-acetylmuramoyl-pentapeptide-transferase.